We begin with the raw amino-acid sequence, 77 residues long: Conotoxin PnMKLT1-0122 (77 aa).

Positions M1–A22 are cleaved as a signal peptide. Residues E23–N49 constitute a propeptide that is removed on maturation. 3 cysteine pairs are disulfide-bonded: C52/C67, C59/C71, and C66/C76.

Belongs to the conotoxin O1 superfamily. As to expression, expressed by the venom duct.

It is found in the secreted. In Conus pennaceus (Feathered cone), this protein is Conotoxin PnMKLT1-0122.